The sequence spans 84 residues: Toxin-like TcoNTxP1 (84 aa).

The N-terminal stretch at 1 to 19 (MKRMILFTSCLLLIDIVVG) is a signal peptide. The LCN-type CS-alpha/beta domain maps to 21–82 (KEGYPADSKG…VWDSATNKCG (62 aa)). 4 disulfide bridges follow: Cys31–Cys81, Cys35–Cys57, Cys43–Cys62, and Cys47–Cys64. Cys81 is modified (cysteine amide). Positions 82-84 (GKK) are excised as a propeptide.

As to expression, expressed by the venom gland.

It is found in the secreted. Functionally, this protein is not toxic. It induces an immune response similar to that induced by whole venom. Thus, polyclonal antibodies raised against this protein can neutralize the effects of the venom. This chain is Toxin-like TcoNTxP1, found in Tityus costatus (Brazilian scorpion).